The chain runs to 701 residues: Glycine--tRNA ligase beta subunit (701 aa).

It belongs to the class-II aminoacyl-tRNA synthetase family. In terms of assembly, tetramer of two alpha and two beta subunits.

It localises to the cytoplasm. The catalysed reaction is tRNA(Gly) + glycine + ATP = glycyl-tRNA(Gly) + AMP + diphosphate. This Nitratidesulfovibrio vulgaris (strain DSM 19637 / Miyazaki F) (Desulfovibrio vulgaris) protein is Glycine--tRNA ligase beta subunit.